The following is a 276-amino-acid chain: Octanoyltransferase LipM (276 aa).

Residues 33–247 (GELKPTLRFY…GFKDAFSLTF (215 aa)) enclose the BPL/LPL catalytic domain. Residue C150 is the Acyl-thioester intermediate of the active site.

The protein belongs to the octanoyltransferase LipM family. Monomer.

The enzyme catalyses octanoyl-[ACP] + L-lysyl-[protein] = N(6)-octanoyl-L-lysyl-[protein] + holo-[ACP] + H(+). It participates in protein modification; protein lipoylation via endogenous pathway; protein N(6)-(lipoyl)lysine from octanoyl-[acyl-carrier-protein]. Catalyzes the transfer of endogenously produced octanoic acid from octanoyl-acyl-carrier-protein onto the lipoyl domain of GcvH, an intermediate carrier during protein lipoylation. The chain is Octanoyltransferase LipM from Exiguobacterium sp. (strain ATCC BAA-1283 / AT1b).